A 378-amino-acid chain; its full sequence is Dihydroorotate dehydrogenase (quinone) (378 aa).

FMN contacts are provided by residues 77–81 (AGFDK) and threonine 101. Position 81 (lysine 81) interacts with substrate. Position 126–130 (126–130 (NRMGF)) interacts with substrate. FMN is bound by residues asparagine 158 and asparagine 191. Asparagine 191 is a substrate binding site. Residue serine 194 is the Nucleophile of the active site. Asparagine 196 contributes to the substrate binding site. Lysine 229 and threonine 257 together coordinate FMN. 258 to 259 (NT) lines the substrate pocket. Residues glycine 287, glycine 316, and 337-338 (YT) contribute to the FMN site.

The protein belongs to the dihydroorotate dehydrogenase family. Type 2 subfamily. In terms of assembly, monomer. The cofactor is FMN.

The protein localises to the cell membrane. It catalyses the reaction (S)-dihydroorotate + a quinone = orotate + a quinol. It functions in the pathway pyrimidine metabolism; UMP biosynthesis via de novo pathway; orotate from (S)-dihydroorotate (quinone route): step 1/1. Catalyzes the conversion of dihydroorotate to orotate with quinone as electron acceptor. The protein is Dihydroorotate dehydrogenase (quinone) of Synechococcus sp. (strain ATCC 27144 / PCC 6301 / SAUG 1402/1) (Anacystis nidulans).